Consider the following 506-residue polypeptide: Trans-cinnamate 4-monooxygenase (506 aa).

Residues 3–23 traverse the membrane as a helical segment; it reads LLLLEKALLGLFAAAVVAIAV. Residues 213-218 and Ala306 each bind (E)-cinnamate; that span reads RSRLAQ. Cys447 is a binding site for heme.

Belongs to the cytochrome P450 family. Requires heme as cofactor.

It localises to the membrane. It carries out the reaction (E)-cinnamate + reduced [NADPH--hemoprotein reductase] + O2 = (E)-4-coumarate + oxidized [NADPH--hemoprotein reductase] + H2O + H(+). Its pathway is phenylpropanoid metabolism; trans-4-coumarate biosynthesis; trans-4-coumarate from trans-cinnamate: step 1/1. Its function is as follows. Catalyzes the first oxidative step of the phenylpropanoid pathway in higher plants by transforming trans-cinnamate into p-coumarate. The compounds formed by this pathway are essential components for lignification, pollination, and defense against ultraviolet light, predators and pathogens. The sequence is that of Trans-cinnamate 4-monooxygenase (CYP73A2) from Ruta graveolens (Common rue).